We begin with the raw amino-acid sequence, 130 residues long: Transcription antitermination protein NusB (130 aa).

Belongs to the NusB family.

Its function is as follows. Involved in transcription antitermination. Required for transcription of ribosomal RNA (rRNA) genes. Binds specifically to the boxA antiterminator sequence of the ribosomal RNA (rrn) operons. The polypeptide is Transcription antitermination protein NusB (Bacillus velezensis (strain DSM 23117 / BGSC 10A6 / LMG 26770 / FZB42) (Bacillus amyloliquefaciens subsp. plantarum)).